The chain runs to 600 residues: Methionine--tRNA ligase (600 aa).

The 'HIGH' region motif lies at 12 to 22; it reads PYANGPRHIGH. The Zn(2+) site is built by cysteine 144, cysteine 147, cysteine 157, and cysteine 160. Positions 351-355 match the 'KMSKS' region motif; the sequence is KFSSS. Serine 354 contacts ATP.

Belongs to the class-I aminoacyl-tRNA synthetase family. MetG type 1 subfamily. Monomer. Zn(2+) is required as a cofactor.

It localises to the cytoplasm. It carries out the reaction tRNA(Met) + L-methionine + ATP = L-methionyl-tRNA(Met) + AMP + diphosphate. In terms of biological role, is required not only for elongation of protein synthesis but also for the initiation of all mRNA translation through initiator tRNA(fMet) aminoacylation. The sequence is that of Methionine--tRNA ligase from Chloroflexus aurantiacus (strain ATCC 29364 / DSM 637 / Y-400-fl).